We begin with the raw amino-acid sequence, 146 residues long: Hemoglobin subunit beta/beta' (146 aa).

The Globin domain occupies 2-146 (HWSAEEKQLI…VAHALARKYH (145 aa)). The heme b site is built by H63 and H92.

It belongs to the globin family. Heterotetramer of two alpha chains and two beta chains. As to expression, red blood cells.

Involved in oxygen transport from the lung to the various peripheral tissues. The polypeptide is Hemoglobin subunit beta/beta' (HBB) (Chroicocephalus ridibundus (Black-headed gull)).